A 438-amino-acid chain; its full sequence is sn-glycerol-3-phosphate-binding periplasmic protein UgpB (438 aa).

A signal peptide spans 1–23 (MKPLHYTASALALGLALMGNAQA). The sn-glycerol 3-phosphate site is built by Tyr65, Glu89, Ser144, Ser270, Gly307, Tyr346, and Arg397.

The protein belongs to the bacterial solute-binding protein 1 family. As to quaternary structure, the complex is composed of two ATP-binding proteins (UgpC), two transmembrane proteins (UgpA and UgpE) and a solute-binding protein (UgpB).

Its subcellular location is the periplasm. In terms of biological role, part of the ABC transporter complex UgpBAEC involved in sn-glycerol-3-phosphate (G3P) import. Binds G3P. The sequence is that of sn-glycerol-3-phosphate-binding periplasmic protein UgpB (ugpB) from Shigella flexneri serotype 5b (strain 8401).